We begin with the raw amino-acid sequence, 489 residues long: DNA-dependent metalloprotease SPRTN (489 aa).

Met1 is subject to N-acetylmethionine. The SprT-like domain maps to 45–212 (LQALFVQFND…KTCGGTYIKI (168 aa)). His111 is a binding site for Zn(2+). Glu112 is an active-site residue. Residues His115 and His130 each coordinate Zn(2+). Lys230 carries the N6-acetyllysine modification. The SHP-box signature appears at 253 to 261 (FSGKGYVLG). Residue Ser268 is modified to Phosphoserine. A Glycyl lysine isopeptide (Lys-Gly) (interchain with G-Cter in SUMO2) cross-link involves residue Lys303. Residues 325-332 (QNVLSNYF) carry the PIP-box motif. Lys341 participates in a covalent cross-link: Glycyl lysine isopeptide (Lys-Gly) (interchain with G-Cter in SUMO2); alternate. Residue Lys341 forms a Glycyl lysine isopeptide (Lys-Gly) (interchain with G-Cter in ubiquitin); alternate linkage. Residues 357-409 (GNIPKNSVSSSSQRRVSSSKISLRNSSKVTESASVMPSQDVSGSEDTFPNKRP) form a disordered region. Lys361 participates in a covalent cross-link: Glycyl lysine isopeptide (Lys-Gly) (interchain with G-Cter in SUMO2). The segment covering 363 to 383 (SVSSSSQRRVSSSKISLRNSS) has biased composition (low complexity). Residues Ser373 and Ser374 each carry the phosphoserine; by CHEK1 modification. Lys376 is covalently cross-linked (Glycyl lysine isopeptide (Lys-Gly) (interchain with G-Cter in SUMO2); alternate). Lys376 is covalently cross-linked (Glycyl lysine isopeptide (Lys-Gly) (interchain with G-Cter in ubiquitin); alternate). The residue at position 383 (Ser383) is a Phosphoserine; by CHEK1. Positions 384-403 (KVTESASVMPSQDVSGSEDT) are enriched in polar residues. The short motif at 402–413 (DTFPNKRPRLED) is the Nuclear localization signal element. A Glycyl lysine isopeptide (Lys-Gly) (interchain with G-Cter in ubiquitin) cross-link involves residue Lys414. Glycyl lysine isopeptide (Lys-Gly) (interchain with G-Cter in SUMO2) cross-links involve residues Lys423 and Lys424. A disordered region spans residues 428 to 453 (KSSGNDPKYSTTTAQNSSSSSSQSKM). A Glycyl lysine isopeptide (Lys-Gly) (interchain with G-Cter in ubiquitin) cross-link involves residue Lys435. The segment covering 437-451 (STTTAQNSSSSSSQS) has biased composition (low complexity). The UBZ4-type zinc-finger motif lies at 453-480 (MVNCPVCQNEVLESQINEHLDWCLEGDS). Zn(2+)-binding residues include Cys456, Cys459, His471, and Cys475. Lys484 participates in a covalent cross-link: Glycyl lysine isopeptide (Lys-Gly) (interchain with G-Cter in SUMO2).

This sequence belongs to the Spartan family. As to quaternary structure, homodimer. Interacts (VIA PIP-box) with PCNA (when ubiquitinated). Interacts (via its SHP-box) with VCP/p97. Interacts with RAD18. Interacts with KCTD13 and POLD3. Requires Zn(2+) as cofactor. Autocatalytically cleaved in response to double-stranded DNA-binding: autocatalytic cleavage takes place in trans and leads to inactivation. Post-translationally, monoubiquitinated; monoubiquitination promotes exclusion from chromatin. Deubiquitinated by VCPIP1: deubiquitination is required for subsequent acetylation and recruitment to chromatin and DNA damage sites. In terms of processing, acetylated following deubiquitination by VCPIP1, leading to recruitment to chromatin and DNA damage sites. Phosphorylation by CHEK1 promotes recruitment to chromatin.

The protein localises to the nucleus. It is found in the chromosome. DNA-binding activates the protease activity: single-stranded DNA-binding specifically activates ability to cleave covalent DNA-protein cross-links (DPCs). In contrast, double-stranded DNA-binding specifically activates autocatalytic cleavage, and subsequent inactivation. Functionally, DNA-dependent metalloendopeptidase that mediates the proteolytic cleavage of covalent DNA-protein cross-links (DPCs) during DNA synthesis, thereby playing a key role in maintaining genomic integrity. DPCs are highly toxic DNA lesions that interfere with essential chromatin transactions, such as replication and transcription, and which are induced by reactive agents, such as UV light or formaldehyde. Associates with the DNA replication machinery and specifically removes DPCs during DNA synthesis. Catalyzes proteolytic cleavage of the HMCES DNA-protein cross-link following unfolding by the BRIP1/FANCJ helicase. Acts as a pleiotropic protease for DNA-binding proteins cross-linked with DNA, such as TOP1, TOP2A, histones H3 and H4. Mediates degradation of DPCs that are not ubiquitinated, while it is not able to degrade ubiquitinated DPCs. SPRTN activation requires polymerase collision with DPCs followed by helicase bypass of DPCs. Involved in recruitment of VCP/p97 to sites of DNA damage. Also acts as an activator of CHEK1 during normal DNA replication by mediating proteolytic cleavage of CHEK1, thereby promoting CHEK1 removal from chromatin and subsequent activation. Does not activate CHEK1 in response to DNA damage. May also act as a 'reader' of ubiquitinated PCNA: recruited to sites of UV damage and interacts with ubiquitinated PCNA and RAD18, the E3 ubiquitin ligase that monoubiquitinates PCNA. Facilitates chromatin association of RAD18 and is required for efficient PCNA monoubiquitination, promoting a feed-forward loop to enhance PCNA ubiquitination and translesion DNA synthesis. The chain is DNA-dependent metalloprotease SPRTN from Homo sapiens (Human).